A 262-amino-acid polypeptide reads, in one-letter code: Shikimate dehydrogenase (NADP(+)) (262 aa).

Shikimate contacts are provided by residues 15-17 and T62; that span reads SRS. K66 acts as the Proton acceptor in catalysis. Residue E78 coordinates NADP(+). N87 and D102 together coordinate shikimate. Residues 126–130, 150–155, and M214 each bind NADP(+); these read GAGGA and NRTLAR. Shikimate is bound at residue Y216. An NADP(+)-binding site is contributed by G236.

The protein belongs to the shikimate dehydrogenase family. Homodimer.

The catalysed reaction is shikimate + NADP(+) = 3-dehydroshikimate + NADPH + H(+). The protein operates within metabolic intermediate biosynthesis; chorismate biosynthesis; chorismate from D-erythrose 4-phosphate and phosphoenolpyruvate: step 4/7. Functionally, involved in the biosynthesis of the chorismate, which leads to the biosynthesis of aromatic amino acids. Catalyzes the reversible NADPH linked reduction of 3-dehydroshikimate (DHSA) to yield shikimate (SA). This is Shikimate dehydrogenase (NADP(+)) from Acinetobacter baumannii (strain ATCC 17978 / DSM 105126 / CIP 53.77 / LMG 1025 / NCDC KC755 / 5377).